We begin with the raw amino-acid sequence, 467 residues long: ATP synthase subunit beta (467 aa).

Residue 156–163 participates in ATP binding; sequence GGAGVGKT.

It belongs to the ATPase alpha/beta chains family. In terms of assembly, F-type ATPases have 2 components, CF(1) - the catalytic core - and CF(0) - the membrane proton channel. CF(1) has five subunits: alpha(3), beta(3), gamma(1), delta(1), epsilon(1). CF(0) has three main subunits: a(1), b(2) and c(9-12). The alpha and beta chains form an alternating ring which encloses part of the gamma chain. CF(1) is attached to CF(0) by a central stalk formed by the gamma and epsilon chains, while a peripheral stalk is formed by the delta and b chains.

The protein resides in the cell membrane. It carries out the reaction ATP + H2O + 4 H(+)(in) = ADP + phosphate + 5 H(+)(out). In terms of biological role, produces ATP from ADP in the presence of a proton gradient across the membrane. The catalytic sites are hosted primarily by the beta subunits. The sequence is that of ATP synthase subunit beta from Cytobacillus firmus (Bacillus firmus).